Here is an 805-residue protein sequence, read N- to C-terminus: Leucine--tRNA ligase (805 aa).

The 'HIGH' region signature appears at 40 to 51 (PYPSGQGLHVGH). Positions 576–580 (KMSKS) match the 'KMSKS' region motif. Lys579 contacts ATP.

It belongs to the class-I aminoacyl-tRNA synthetase family.

The protein localises to the cytoplasm. The catalysed reaction is tRNA(Leu) + L-leucine + ATP = L-leucyl-tRNA(Leu) + AMP + diphosphate. The chain is Leucine--tRNA ligase from Ligilactobacillus salivarius (strain UCC118) (Lactobacillus salivarius).